We begin with the raw amino-acid sequence, 179 residues long: Adenylyl-sulfate kinase (179 aa).

13–20 (GLSGAGKS) is a binding site for ATP. The active-site Phosphoserine intermediate is the serine 87.

The protein belongs to the APS kinase family.

The catalysed reaction is adenosine 5'-phosphosulfate + ATP = 3'-phosphoadenylyl sulfate + ADP + H(+). Its pathway is sulfur metabolism; hydrogen sulfide biosynthesis; sulfite from sulfate: step 2/3. Catalyzes the synthesis of activated sulfate. This Paraburkholderia xenovorans (strain LB400) protein is Adenylyl-sulfate kinase.